We begin with the raw amino-acid sequence, 1115 residues long: PAN2-PAN3 deadenylation complex catalytic subunit PAN2 (1115 aa).

WD repeat units lie at residues 27-66 (NRDK…YTRY), 112-153 (AAFS…GCLD), 155-194 (LLNY…TIKS), 197-236 (AHSA…YDLR), and 295-334 (HPCQ…MGMF). Residues 337 to 473 (TPEMLAYPDY…IQTYTSINKY (137 aa)) form a linker region. The region spanning 474 to 855 (EVPPAYSRLP…TPEIIIYCDA (382 aa)) is the USP domain. Zn(2+) is bound by residues cysteine 660, histidine 662, cysteine 713, and cysteine 716. The region spanning 907–1079 (VAIDAEFVSL…EDAHTALILY (173 aa)) is the Exonuclease domain. A divalent metal cation-binding residues include aspartate 910, glutamate 912, aspartate 1020, and aspartate 1071.

This sequence belongs to the peptidase C19 family. PAN2 subfamily. As to quaternary structure, forms a heterotrimer with an asymmetric homodimer of the regulatory subunit PAN3 to form the poly(A)-nuclease (PAN) deadenylation complex. The cofactor is a divalent metal cation.

Its subcellular location is the cytoplasm. The catalysed reaction is Exonucleolytic cleavage of poly(A) to 5'-AMP.. Its activity is regulated as follows. Positively regulated by the regulatory subunit PAN3. Negatively regulated by PAB1-binding protein PBP1. Inhibited under stress conditions. Inhibition of deadenylation under stress increases mRNA stability, which may be a mechanism to retain the majority of the cytoplasmic pool of mRNAs for later reuse and recovery from stress. Catalytic subunit of the poly(A)-nuclease (PAN) deadenylation complex, one of two cytoplasmic mRNA deadenylases involved in mRNA turnover. PAN specifically shortens poly(A) tails of RNA and the activity is stimulated by poly(A)-binding protein PAB1. PAN deadenylation is followed by rapid degradation of the shortened mRNA tails by the CCR4-NOT complex. Deadenylated mRNAs are then degraded by two alternative mechanisms, namely exosome-mediated 3'-5' exonucleolytic degradation, or deadenylation-dependent mRNA decaping by DCP1-DCP2 and subsequent 5'-3' exonucleolytic degradation by XRN1. May also be involved in post-transcriptional maturation of mRNA poly(A) tails, trimming the tails from their synthesized length to the slightly shorter, apparently messenger-specific length found on newly exported mRNAs. PAN cooperates with protein kinase DUN1 in the regulation of RAD5 mRNA levels and cell survival in response to replicational stress. The chain is PAN2-PAN3 deadenylation complex catalytic subunit PAN2 from Saccharomyces cerevisiae (strain ATCC 204508 / S288c) (Baker's yeast).